The following is a 541-amino-acid chain: Propionyl-CoA carboxylase beta chain, mitochondrial (541 aa).

The transit peptide at 1–28 (MAAVIRIRAMAAGTRLRVLNCGLGTTIR) directs the protein to the mitochondrion. In terms of domain architecture, CoA carboxyltransferase N-terminal spans 34–292 (PVSVNERIEN…SNQDPASIRE (259 aa)). The tract at residues 34–535 (PVSVNERIEN…SKKVHRPWRK (502 aa)) is carboxyltransferase. A Phosphoserine modification is found at Ser-73. Lys-101 carries the N6-acetyllysine; alternate modification. Residue Lys-101 is modified to N6-succinyllysine; alternate. N6-succinyllysine is present on Lys-250. Residues 296-535 (PSDRLVPELD…SKKVHRPWRK (240 aa)) form the CoA carboxyltransferase C-terminal domain. The acyl-CoA binding stretch occupies residues 327–360 (DEREFFEIMPNYAKNIVIGFARMNGRTVGIVGNQ). An N6-acetyllysine; alternate mark is found at Lys-476 and Lys-491. Lys-476 and Lys-491 each carry N6-succinyllysine; alternate.

This sequence belongs to the AccD/PCCB family. The holoenzyme is a dodecamer composed of 6 PCCA/alpha subunits and 6 PCCB/beta subunits.

The protein resides in the mitochondrion matrix. The catalysed reaction is propanoyl-CoA + hydrogencarbonate + ATP = (S)-methylmalonyl-CoA + ADP + phosphate + H(+). It catalyses the reaction butanoyl-CoA + hydrogencarbonate + ATP = (2S)-ethylmalonyl-CoA + ADP + phosphate + H(+). It functions in the pathway metabolic intermediate metabolism; propanoyl-CoA degradation; succinyl-CoA from propanoyl-CoA: step 1/3. In terms of biological role, this is one of the 2 subunits of the biotin-dependent propionyl-CoA carboxylase (PCC), a mitochondrial enzyme involved in the catabolism of odd chain fatty acids, branched-chain amino acids isoleucine, threonine, methionine, and valine and other metabolites. Propionyl-CoA carboxylase catalyzes the carboxylation of propionyl-CoA/propanoyl-CoA to D-methylmalonyl-CoA/(S)-methylmalonyl-CoA. Within the holoenzyme, the alpha subunit catalyzes the ATP-dependent carboxylation of the biotin carried by the biotin carboxyl carrier (BCC) domain, while the beta subunit then transfers the carboxyl group from carboxylated biotin to propionyl-CoA. Propionyl-CoA carboxylase also significantly acts on butyryl-CoA/butanoyl-CoA, which is converted to ethylmalonyl-CoA/(2S)-ethylmalonyl-CoA. Other alternative minor substrates include (2E)-butenoyl-CoA/crotonoyl-CoA. The protein is Propionyl-CoA carboxylase beta chain, mitochondrial of Rattus norvegicus (Rat).